A 615-amino-acid polypeptide reads, in one-letter code: MNNLIKSKLELLPTSPGCYIHKDKNGSIIYVGKAKNLRNRVRSYFRGSHDTKTEALVSEIVDFEFIVTESNIEALLLEINLIKENKPKYNIMLKDDKSYPFIKITNERYPRLIITRQVKKDGGLYFGPYPDVGAANEIKRLLDRIFPFRKCTNPPSKVCFYYHIGQCMAHTICKKDEAYFKSMAQEVSDFLKGQDNKIIDELKGKMAAAAQTMEFERAAEYRDLIQAIGTLRTKQRVMAKDLQNRDVFGYYVDKGWMCVQVFFVRQGKLIERDVNLFPYFNDPDEDFLTYVGQFYQEKSHLVPNEVLIPQDIDEEAVKALVDTKILKPQRGEKKQLVNLAIKNARVSLEQKFNLLEKSVEKTQGAIENLGRLLQIPTPVRIESFDNSNIMGTSPVSAMVVFVNGRPSKKDYRKYKIKTVVGPDDYASMREVIRRRYGRVQREALTPPDLIVIDGGQGQVNIAKQVIQEELGLDIPIAGLQKNDKHQTHELLFGDPLEVVDLSRNSQEFFLLQRIQDEVHRFAITFHRQLRSKNSFSSQLDGIDGLGPKRKQNLMRHFKSLTKIKEASVDEIVEVGVPRAVAEAVQTKLNPQETEILLQVAEERVDYQTEGNHNKP.

Residues 14 to 91 (TSPGCYIHKD…IKENKPKYNI (78 aa)) enclose the GIY-YIG domain. The UVR domain maps to 196–231 (NKIIDELKGKMAAAAQTMEFERAAEYRDLIQAIGTL).

It belongs to the UvrC family. Interacts with UvrB in an incision complex.

The protein resides in the cytoplasm. The UvrABC repair system catalyzes the recognition and processing of DNA lesions. UvrC both incises the 5' and 3' sides of the lesion. The N-terminal half is responsible for the 3' incision and the C-terminal half is responsible for the 5' incision. In Streptococcus pneumoniae (strain JJA), this protein is UvrABC system protein C.